The chain runs to 59 residues: Large ribosomal subunit protein uL30 (59 aa).

This sequence belongs to the universal ribosomal protein uL30 family. Part of the 50S ribosomal subunit.

The protein is Large ribosomal subunit protein uL30 of Bacillus licheniformis (strain ATCC 14580 / DSM 13 / JCM 2505 / CCUG 7422 / NBRC 12200 / NCIMB 9375 / NCTC 10341 / NRRL NRS-1264 / Gibson 46).